A 364-amino-acid chain; its full sequence is Nucleoporin SEH1 (364 aa).

WD repeat units follow at residues 10 to 49 (DHKD…EWNC), 55 to 96 (THSG…SNDK), 111 to 152 (DSRT…NLSQ), 160 to 210 (SCKL…RKYA), 217 to 258 (TVTD…KESS), and 275 to 314 (GHNS…NWKC). The interval 326–364 (NGAAGQAGTPGAAGTPGGPASQNALQAVAGRKKAQLMPG) is disordered. Residues 327-338 (GAAGQAGTPGAA) are compositionally biased toward low complexity. Basic residues predominate over residues 355–364 (GRKKAQLMPG).

It belongs to the WD repeat SEC13 family. As to quaternary structure, component of the Nup107-160 subcomplex of the nuclear pore complex (NPC). The Nup107-160 subcomplex includes NUP160, NUP133, NUP107, NUP98, NUP85, NUP43, NUP37, SEH1 and SEC13. Component of the GATOR2 subcomplex, composed of MIOS, SEC13, SEH1L, WDR24 and WDR59. The GATOR2 complex interacts with CASTOR1 and CASTOR2; the interaction is negatively regulated by arginine. The GATOR2 complex interacts with SESN1, SESN2 and SESN3; the interaction is negatively regulated by amino acids.

The protein localises to the chromosome. It localises to the centromere. The protein resides in the kinetochore. It is found in the nucleus. Its subcellular location is the nuclear pore complex. The protein localises to the lysosome membrane. The GATOR2 complex is negatively regulated by the upstream amino acid sensors CASTOR1 and SESN2, which sequester the GATOR2 complex in absence of amino acids. In the presence of abundant amino acids, GATOR2 is released from CASTOR1 and SESN2 and activated. Functionally, component of the Nup107-160 subcomplex of the nuclear pore complex (NPC). The Nup107-160 subcomplex is required for the assembly of a functional NPC. The Nup107-160 subcomplex is also required for normal kinetochore microtubule attachment, mitotic progression and chromosome segregation. This subunit plays a role in recruitment of the Nup107-160 subcomplex to the kinetochore. As a component of the GATOR2 complex, functions as an activator of the amino acid-sensing branch of the mTORC1 signaling pathway. The GATOR2 complex indirectly activates mTORC1 through the inhibition of the GATOR1 subcomplex. GATOR2 probably acts as an E3 ubiquitin-protein ligase toward GATOR1. In the presence of abundant amino acids, the GATOR2 complex mediates ubiquitination of the NPRL2 core component of the GATOR1 complex, leading to GATOR1 inactivation. In the absence of amino acids, GATOR2 is inhibited, activating the GATOR1 complex. In Osmerus mordax (Rainbow smelt), this protein is Nucleoporin SEH1 (seh1l).